Here is a 244-residue protein sequence, read N- to C-terminus: Purine nucleoside phosphorylase HI_0175 (244 aa).

The Zn(2+) site is built by histidine 70, cysteine 105, and histidine 122.

This sequence belongs to the purine nucleoside phosphorylase YfiH/LACC1 family. In terms of assembly, homodimer. Cu(2+) serves as cofactor. Zn(2+) is required as a cofactor.

The catalysed reaction is adenosine + phosphate = alpha-D-ribose 1-phosphate + adenine. The enzyme catalyses S-methyl-5'-thioadenosine + phosphate = 5-(methylsulfanyl)-alpha-D-ribose 1-phosphate + adenine. It catalyses the reaction inosine + phosphate = alpha-D-ribose 1-phosphate + hypoxanthine. It carries out the reaction adenosine + H2O + H(+) = inosine + NH4(+). In terms of biological role, purine nucleoside enzyme that catalyzes the phosphorolysis of adenosine and inosine nucleosides, yielding D-ribose 1-phosphate and the respective free bases, adenine and hypoxanthine. Also catalyzes the phosphorolysis of S-methyl-5'-thioadenosine into adenine and S-methyl-5-thio-alpha-D-ribose 1-phosphate. Also has adenosine deaminase activity. The sequence is that of Purine nucleoside phosphorylase HI_0175 from Haemophilus influenzae (strain ATCC 51907 / DSM 11121 / KW20 / Rd).